We begin with the raw amino-acid sequence, 272 residues long: Orotidine 5'-phosphate decarboxylase (272 aa).

K95 serves as the catalytic Proton donor.

This sequence belongs to the OMP decarboxylase family. Type 2 subfamily.

The catalysed reaction is orotidine 5'-phosphate + H(+) = UMP + CO2. It functions in the pathway pyrimidine metabolism; UMP biosynthesis via de novo pathway; UMP from orotate: step 2/2. In Bordetella avium (strain 197N), this protein is Orotidine 5'-phosphate decarboxylase.